Consider the following 444-residue polypeptide: Maltoporin (444 aa).

The signal sequence occupies residues 1–24 (MITLRKVPLALAIAAGILSAQAGA).

It belongs to the porin LamB (TC 1.B.3) family. In terms of assembly, homotrimer formed of three 18-stranded antiparallel beta-barrels, containing three independent channels.

The protein localises to the cell outer membrane. It carries out the reaction beta-maltose(in) = beta-maltose(out). Its function is as follows. Involved in the transport of maltose and maltodextrins. This is Maltoporin from Enterobacter sp. (strain 638).